The primary structure comprises 114 residues: Superoxide dismutase [Cu-Zn] (114 aa).

The Cu cation site is built by histidine 37, histidine 39, and histidine 54. Positions 54, 62, 71, and 74 each coordinate Zn(2+). Residues 54–80 (HFNPGNKEHGAPTDGNRHLGDLGNIQA) are disordered. Basic and acidic residues predominate over residues 59–73 (NKEHGAPTDGNRHLG). Histidine 111 contacts Cu cation.

It belongs to the Cu-Zn superoxide dismutase family. As to quaternary structure, homodimer. Cu cation is required as a cofactor. Zn(2+) serves as cofactor.

Its subcellular location is the cytoplasm. It catalyses the reaction 2 superoxide + 2 H(+) = H2O2 + O2. In terms of biological role, destroys radicals which are normally produced within the cells and which are toxic to biological systems. The protein is Superoxide dismutase [Cu-Zn] of Drosophila tolteca (Fruit fly).